The primary structure comprises 135 residues: Transcriptional activator protein (135 aa).

A Nuclear localization signal motif is present at residues 17 to 32 (KAQHKVAKKRAIRRSR). Residues 37 to 54 (CGCSYYIHINCRNYGFSH) fold into a zinc finger. The disordered stretch occupies residues 82–102 (AAPSNSSRVPDVCDPNTDNVQ). The tract at residues 120 to 135 (ALPLFDGDFWDDIIDF) is transactivation.

This sequence belongs to the geminiviridae transcriptional activator protein family. In terms of assembly, monomer. Homodimer. Homooligomer. Self-interaction correlates with nuclear localization and efficient activation of transcription. Monomers suppress local silencing by interacting with and inactivating host adenosine kinase 2 (ADK2) in the cytoplasm. Interacts with and inhibits host SNF1 kinase. Binds to ssDNA. Phosphorylated.

The protein resides in the host nucleus. The protein localises to the host cytoplasm. Functionally, strong activator of the late viral genes promoters. Enhances the expression of the capsid protein and nuclear shuttle protein. Acts as a suppressor of RNA-mediated gene silencing, also known as post-transcriptional gene silencing (PTGS), a mechanism of plant viral defense that limits the accumulation of viral RNAs. Suppresses the host RNA silencing by inhibiting adenosine kinase 2 (ADK2), a kinase involved in a general methylation pathway. Also suppresses the host basal defense by interacting with and inhibiting SNF1 kinase, a key regulator of cell metabolism implicated in innate antiviral defense. Determines pathogenicity. The sequence is that of Transcriptional activator protein from Mungbean yellow mosaic virus (strain Vigna) (MYMV).